A 363-amino-acid chain; its full sequence is 3-isopropylmalate dehydrogenase (363 aa).

NAD(+) is bound at residue 78–91; that stretch reads GKRWDHLPINERPE. Substrate-binding residues include Arg99, Arg109, Arg138, and Asp227. Residues Asp227, Asp251, and Asp255 each coordinate Mg(2+). Residue 285-297 participates in NAD(+) binding; that stretch reads GSAPDIAGKNTAN.

It belongs to the isocitrate and isopropylmalate dehydrogenases family. LeuB type 1 subfamily. Homodimer. Mg(2+) serves as cofactor. The cofactor is Mn(2+).

It localises to the cytoplasm. It carries out the reaction (2R,3S)-3-isopropylmalate + NAD(+) = 4-methyl-2-oxopentanoate + CO2 + NADH. It participates in amino-acid biosynthesis; L-leucine biosynthesis; L-leucine from 3-methyl-2-oxobutanoate: step 3/4. In terms of biological role, catalyzes the oxidation of 3-carboxy-2-hydroxy-4-methylpentanoate (3-isopropylmalate) to 3-carboxy-4-methyl-2-oxopentanoate. The product decarboxylates to 4-methyl-2 oxopentanoate. This Buchnera aphidicola subsp. Uroleucon helianthicola protein is 3-isopropylmalate dehydrogenase.